The primary structure comprises 219 residues: Ribose-5-phosphate isomerase A (219 aa).

Residues 28-31, 81-84, and 94-97 each bind substrate; these read SGST, DGAD, and KGGG. Catalysis depends on Glu103, which acts as the Proton acceptor. Lys121 contributes to the substrate binding site.

This sequence belongs to the ribose 5-phosphate isomerase family. As to quaternary structure, homodimer.

It catalyses the reaction aldehydo-D-ribose 5-phosphate = D-ribulose 5-phosphate. It participates in carbohydrate degradation; pentose phosphate pathway; D-ribose 5-phosphate from D-ribulose 5-phosphate (non-oxidative stage): step 1/1. Its function is as follows. Catalyzes the reversible conversion of ribose-5-phosphate to ribulose 5-phosphate. This Haemophilus influenzae (strain ATCC 51907 / DSM 11121 / KW20 / Rd) protein is Ribose-5-phosphate isomerase A.